Reading from the N-terminus, the 419-residue chain is Squamosa promoter-binding-like protein 2 (419 aa).

A disordered region spans residues 77 to 96; the sequence is SAEVRTHNFTSETGESLPGE. An SBP-type zinc finger spans residues 166–243; sequence TPHCQVEGCN…SDHNARRRKP (78 aa). Residues C169, C174, C191, H194, C210, C213, H217, and C229 each coordinate Zn(2+). The Bipartite nuclear localization signal motif lies at 226–242; sequence KRSCRRRLSDHNARRRK. The disordered stretch occupies residues 230-249; it reads RRRLSDHNARRRKPNPGRTY.

Zn(2+) serves as cofactor.

The protein resides in the nucleus. Functionally, trans-acting factor that binds specifically to the consensus nucleotide sequence 5'-TNCGTACAA-3'. This chain is Squamosa promoter-binding-like protein 2 (SPL2), found in Arabidopsis thaliana (Mouse-ear cress).